A 326-amino-acid polypeptide reads, in one-letter code: Malate dehydrogenase (326 aa).

12-18 (GGTGQIA) contributes to the NAD(+) binding site. Positions 93 and 99 each coordinate substrate. Residues asparagine 106, glutamine 113, and 130-132 (VGN) each bind NAD(+). Residues asparagine 132 and arginine 163 each coordinate substrate. The active-site Proton acceptor is histidine 188.

The protein belongs to the LDH/MDH superfamily. MDH type 2 family.

It catalyses the reaction (S)-malate + NAD(+) = oxaloacetate + NADH + H(+). In terms of biological role, catalyzes the reversible oxidation of malate to oxaloacetate. In Chlamydia trachomatis serovar D (strain ATCC VR-885 / DSM 19411 / UW-3/Cx), this protein is Malate dehydrogenase.